The following is a 566-amino-acid chain: 3-oxosteroid 1-dehydrogenase (566 aa).

FAD is bound at residue 10-39 (DVVVVGSGAAGMVAALVAAHRGLSTVVVEK).

The protein belongs to the FAD-dependent oxidoreductase 2 family. 3-oxosteroid dehydrogenase subfamily. It depends on FAD as a cofactor.

The catalysed reaction is a 3-oxosteroid + A = a 3-oxo-Delta(1)-steroid + AH2. It carries out the reaction a 3-oxo-Delta(4)-steroid + A = a 3-oxo-Delta(1,4)-steroid + AH2. In terms of biological role, involved in the degradation of cholesterol. Catalyzes the elimination of the C-1 and C-2 hydrogen atoms of the A-ring from the polycyclic ring structure of 3-ketosteroids. Is also involved in the formation of 3-keto-1,4-diene-steroid from 3-keto-4-ene-steroid. The chain is 3-oxosteroid 1-dehydrogenase (kstD) from Mycobacterium tuberculosis (strain CDC 1551 / Oshkosh).